A 1030-amino-acid polypeptide reads, in one-letter code: Translation initiation factor IF-2 (1030 aa).

Composition is skewed to low complexity over residues 56–69 (APSEPVAAASAADS) and 111–132 (PNIVAPPRRPAAANEPAKAPIK). Disordered stretches follow at residues 56 to 361 (APSE…KRRQ) and 394 to 434 (SKPK…REQK). Residues 134–144 (ARPEKSAEKPE) show a composition bias toward basic and acidic residues. Residues 154–164 (AASAEPAKSPS) show a composition bias toward low complexity. The span at 188-206 (LLRKPEIVRRSEAKPERTS) shows a compositional bias: basic and acidic residues. Low complexity predominate over residues 259–273 (VAASASGVPAAASRV). The 174-residue stretch at 522–695 (TRPPVVTVMG…LLVTEVEELV (174 aa)) folds into the tr-type G domain. The segment at 531-538 (GHVDHGKT) is G1. 531–538 (GHVDHGKT) is a binding site for GTP. The tract at residues 556–560 (GITQH) is G2. A G3 region spans residues 581–584 (DTPG). GTP-binding positions include 581–585 (DTPGH) and 635–638 (NKCD). The segment at 635 to 638 (NKCD) is G4. Residues 671 to 673 (SAI) form a G5 region.

Belongs to the TRAFAC class translation factor GTPase superfamily. Classic translation factor GTPase family. IF-2 subfamily.

The protein resides in the cytoplasm. One of the essential components for the initiation of protein synthesis. Protects formylmethionyl-tRNA from spontaneous hydrolysis and promotes its binding to the 30S ribosomal subunits. Also involved in the hydrolysis of GTP during the formation of the 70S ribosomal complex. This is Translation initiation factor IF-2 from Synechococcus elongatus (strain ATCC 33912 / PCC 7942 / FACHB-805) (Anacystis nidulans R2).